The sequence spans 236 residues: uncharacterized protein (236 aa).

It to M.tuberculosis Rv2557.

This is an uncharacterized protein from Mycobacterium tuberculosis (strain CDC 1551 / Oshkosh).